Here is a 452-residue protein sequence, read N- to C-terminus: Protein EARLY-RESPONSIVE TO DEHYDRATION 7, chloroplastic (452 aa).

The segment covering 1–18 has biased composition (polar residues); the sequence is MESSGDKQTSSLYPTVDT. The transit peptide at 1–28 directs the protein to the chloroplast; the sequence is MESSGDKQTSSLYPTVDTSNPEAPINPS. The interval 1–37 is disordered; that stretch reads MESSGDKQTSSLYPTVDTSNPEAPINPSSSSSTNNLY. A compositionally biased stretch (low complexity) spans 19-37; the sequence is SNPEAPINPSSSSSTNNLY. The region spanning 258–426 is the Senescence domain; sequence IATGSGHLIK…AWVAFKIRKA (169 aa).

The protein localises to the plastid. Its subcellular location is the chloroplast. The protein is Protein EARLY-RESPONSIVE TO DEHYDRATION 7, chloroplastic of Arabidopsis thaliana (Mouse-ear cress).